An 803-amino-acid chain; its full sequence is MAKNTQRTMPVLPLRDVVVFPYMVMPLFVGRAKSINALEEAMNDDKQILLVSQREADLEEPTPEDLFDVGTIANIIQLLKLPDDTVKVLVEGQNRAKINSLEDGEKCFSAQITPIETTYGDEKELVVAKSAVLSEFENYLTLNKKVPTDILNALQRIDDVDRLADTMAAHLPVSIRHKQNALELANVQERLEYLLGMMESEADILQVEKRIRGRVKKQMEKSQRNYYLNEQIKAIRKEMDGGENEDTIDEVEQLHQKVEAAGMPADVRDKVENELQKLKMMSAMSSEATVIRSYIEWMIQVPWHQRSKVKKDIVKAQQVLDTDHYGLDRVKERILEYLAVQARLNKVKGPILCLVGPPGVGKTSLGQSIANATGRKYVRMALGGVRDEAEIRGHRKTYIGALPGKLIQKMAKVGVKNPLFLLDEIDKMASDMRGDPASALLEVLDPEQNTTFNDHYLEVDYDLSDVMFVATSNSMNIPGPLLDRMEVIRLSGYTEDEKLNIAMRHLLAKQIERNGLKKGELTVEESAILDIIRYYTREAGVRGLEREISKICRKAVKNLLVNPKLKSITVNSDNLHDYLGVKRFEFGKADTQNRIGEVTGLAWTEVGGDLLTIETASVVGKGKLSFTGSLGDVMKESIQAAMTVVRARADKLGINAEFHEKRDIHIHVPDGATPKDGPSAGIAMCTALISCLTGNPVRADVAMTGEISLRGKVLPIGGLKEKLLAAHRGGIKTVLIPKENVKDLEEIPENVKQNLAIHAVETIDEVLGFALENPPEGIEFVKVEAKPKAPRRKVTSKSERAVN.

One can recognise a Lon N-terminal domain in the interval 9-202 (MPVLPLRDVV…YLLGMMESEA (194 aa)). 356-363 (GPPGVGKT) contributes to the ATP binding site. The 182-residue stretch at 592–773 (QNRIGEVTGL…DEVLGFALEN (182 aa)) folds into the Lon proteolytic domain. Residues Ser679 and Lys722 contribute to the active site.

Belongs to the peptidase S16 family. Homohexamer. Organized in a ring with a central cavity.

The protein localises to the cytoplasm. It catalyses the reaction Hydrolysis of proteins in presence of ATP.. Functionally, ATP-dependent serine protease that mediates the selective degradation of mutant and abnormal proteins as well as certain short-lived regulatory proteins. Required for cellular homeostasis and for survival from DNA damage and developmental changes induced by stress. Degrades polypeptides processively to yield small peptide fragments that are 5 to 10 amino acids long. Binds to DNA in a double-stranded, site-specific manner. The chain is Lon protease from Haemophilus influenzae (strain ATCC 51907 / DSM 11121 / KW20 / Rd).